A 33-amino-acid chain; its full sequence is Defensin-1 (33 aa).

Cystine bridges form between Cys-4–Cys-32, Cys-6–Cys-21, and Cys-11–Cys-31.

It belongs to the alpha-defensin family.

The protein localises to the secreted. Functionally, has antibacterial activity against the Gram-negative bacterium E.coli and the Gram-positive bacteria L.monocytogenes and S.aureus. Has antifungal activity against C.albicans. In Papio hamadryas (Hamadryas baboon), this protein is Defensin-1.